The chain runs to 343 residues: Leucine-rich repeat-containing protein 23 (343 aa).

Acidic residues predominate over residues 1–30 (MSDEDDLEDSEPDQDDSEKEEDEKETEEGE). The disordered stretch occupies residues 1–47 (MSDEDDLEDSEPDQDDSEKEEDEKETEEGEDYRKEGEEFPEEWLPTP). 8 LRR repeats span residues 92 to 113 (HLRY…NYLT), 114 to 134 (HLLW…NELP), 135 to 155 (YLQI…ISHP), 156 to 177 (RLET…DPEK), 180 to 200 (SLHT…INLP), 201 to 222 (KLKN…EDLS), 223 to 244 (NLTT…SREM), and 246 to 267 (SLQY…AKLR). The interval 208–343 (AQNMLKKVEG…RDLEPEQSLI (136 aa)) is interaction with RSPH9. Residues 280–318 (NPCTDETSYRQEALVQMPYLERLDKEFYEEEERAEADVI) enclose the LRRCT domain. A coiled-coil region spans residues 307–329 (YEEEERAEADVIRQRLKEEKEQE). Over residues 318-337 (IRQRLKEEKEQEPEPQRDLE) the composition is skewed to basic and acidic residues. The disordered stretch occupies residues 318-343 (IRQRLKEEKEQEPEPQRDLEPEQSLI).

In terms of assembly, component of the axonemal radial spoke complex. Interacts with RSPH3. Interacts with RSPH9. Expressed in spermatozoa.

It localises to the cell projection. It is found in the cilium. Its subcellular location is the flagellum. The protein resides in the cytoplasm. The protein localises to the cytoskeleton. It localises to the flagellum axoneme. In terms of biological role, essential for sperm motility and male fertility. Plays an important role in the proper assembly of the third radial spoke (RS3) head and the bridge structure between RS2 and RS3 in the sperm flagella. In Homo sapiens (Human), this protein is Leucine-rich repeat-containing protein 23 (LRRC23).